Here is a 1096-residue protein sequence, read N- to C-terminus: MSNFKFYDPLSELMSGQLGGGSITGDMTVVAPSKISQSEPPTDPTDLVNKQYVDDAISNGAFLPLVGGTLLGKVYQPMDPSAPTELVNKKYVDSVATGGGPVDVYLPLAGGTLTGPAKYASPPTTDDQLVNKQYVDGQVTALGSGPFLPLTGGALTGQVVQPSAPVAANNLVNKQYVDDTITTQISTVTSNQNSTFLPLAGGTVTGPINYASPPTANEQLANKQYVDGQVTALGSGPFLPLAGGTVTGPIVQTAPATAQNHLVTKDYVDGVATVSDATTAAKGVVQLAGDLSGVAAAPTIAAGVVTNAKLANLTGPSHLKGSNETSAAATDISLGPNLTIGGGGVLDVDSSKIPTIPVQVAQGGTGATTLTGYVKGNGTSPLTTVAKIPVQDVNGSVLTVNGSAPDANGNVATALSNVLTGLDANRPTVIPASGTMYVVSGDDPTVNGKSYISNGTNWLTINTASTSNDTRYVLKGGDTMGGDLSFPSTTKLTLDAAPVNATDAVNKQYVDTQMAGATVANATTTAPGIVQLAGDLSGTATVPKIANAVVSNQKLTPGTSGTLKGTDTTGAVADVTLGSGLTISGTTLSVDAASVPKAGSSQFGTVQFNATSGDLEPSGANSGIALVKSGAINNVKLANFSGPSRLKGSSSLSSTPDDISLGTGLTMTGTVLSVDQSTLTNVLPLSGGTMTGPIVQPADPTSDTQLANKKYVDTAIGSVGATKYLALTGGAVTGTIQSPAPTAASDLTNKEYVDNKVTALGSGPFLPLSGGVVTGVVSQAALPTANEDLANKQYVDQKVATVSGGTAASPATTTSLGTIQLGGDLAGVGSEASAPVITSAAITNNKLKPGGSGTLKGTDTAGAISDVILGPSMSMTNGNQLNAAISVLSGSNPNVTAPTDRPSTANVLYLGTDGGVWVWNGTSYVSPTGSSFKFIKSTTKYTIPLTTAPSTSLQLTDYNIAVLPGQTCRASYMIRYQTGDASYGVSFGFSGPVAGDFFFGHSYMLTTNPGIATSINAVSWAITNMTSLLGVTDTSTPSSNLGTTDDNQYATAMITVEFTNNGTASKTLVVLFNRDLSNYPNVTQRVVGGSVEYRMY.

Belongs to the IIV-6 261R/396L/443R family.

This is an uncharacterized protein from Invertebrate iridescent virus 3 (IIV-3).